The following is a 199-amino-acid chain: ATP-dependent Clp protease proteolytic subunit (199 aa).

The Nucleophile role is filled by serine 97. The active site involves histidine 122.

This sequence belongs to the peptidase S14 family. In terms of assembly, fourteen ClpP subunits assemble into 2 heptameric rings which stack back to back to give a disk-like structure with a central cavity, resembling the structure of eukaryotic proteasomes.

It is found in the cytoplasm. The catalysed reaction is Hydrolysis of proteins to small peptides in the presence of ATP and magnesium. alpha-casein is the usual test substrate. In the absence of ATP, only oligopeptides shorter than five residues are hydrolyzed (such as succinyl-Leu-Tyr-|-NHMec, and Leu-Tyr-Leu-|-Tyr-Trp, in which cleavage of the -Tyr-|-Leu- and -Tyr-|-Trp bonds also occurs).. Cleaves peptides in various proteins in a process that requires ATP hydrolysis. Has a chymotrypsin-like activity. Plays a major role in the degradation of misfolded proteins. This chain is ATP-dependent Clp protease proteolytic subunit, found in Geotalea uraniireducens (strain Rf4) (Geobacter uraniireducens).